The following is a 586-amino-acid chain: Arginine--tRNA ligase (586 aa).

The 'HIGH' region motif lies at 131-141; it reads ANPTGPLHVGH.

This sequence belongs to the class-I aminoacyl-tRNA synthetase family. In terms of assembly, monomer.

The protein resides in the cytoplasm. The catalysed reaction is tRNA(Arg) + L-arginine + ATP = L-arginyl-tRNA(Arg) + AMP + diphosphate. This is Arginine--tRNA ligase from Nitrosomonas europaea (strain ATCC 19718 / CIP 103999 / KCTC 2705 / NBRC 14298).